The following is a 235-amino-acid chain: Nitrile hydratase subunit beta (235 aa).

Belongs to the nitrile hydratase subunit beta family. In terms of assembly, heterodimer of an alpha and a beta chain.

It carries out the reaction an aliphatic primary amide = an aliphatic nitrile + H2O. NHase catalyzes the hydration of various nitrile compounds to the corresponding amides. The polypeptide is Nitrile hydratase subunit beta (nthB) (Rhodococcus sp).